We begin with the raw amino-acid sequence, 283 residues long: Acetyl-coenzyme A carboxylase carboxyl transferase subunit beta (283 aa).

One can recognise a CoA carboxyltransferase N-terminal domain in the interval 23-283 (LWIKCPSCSE…DFLMAGKAAA (261 aa)). The Zn(2+) site is built by cysteine 27, cysteine 30, cysteine 46, and cysteine 49. The C4-type zinc-finger motif lies at 27–49 (CPSCSEMLFTKEYEDNLSVCPHC).

This sequence belongs to the AccD/PCCB family. As to quaternary structure, acetyl-CoA carboxylase is a heterohexamer composed of biotin carboxyl carrier protein (AccB), biotin carboxylase (AccC) and two subunits each of ACCase subunit alpha (AccA) and ACCase subunit beta (AccD). Zn(2+) serves as cofactor.

The protein resides in the cytoplasm. The enzyme catalyses N(6)-carboxybiotinyl-L-lysyl-[protein] + acetyl-CoA = N(6)-biotinyl-L-lysyl-[protein] + malonyl-CoA. It functions in the pathway lipid metabolism; malonyl-CoA biosynthesis; malonyl-CoA from acetyl-CoA: step 1/1. Component of the acetyl coenzyme A carboxylase (ACC) complex. Biotin carboxylase (BC) catalyzes the carboxylation of biotin on its carrier protein (BCCP) and then the CO(2) group is transferred by the transcarboxylase to acetyl-CoA to form malonyl-CoA. The sequence is that of Acetyl-coenzyme A carboxylase carboxyl transferase subunit beta from Novosphingobium aromaticivorans (strain ATCC 700278 / DSM 12444 / CCUG 56034 / CIP 105152 / NBRC 16084 / F199).